The primary structure comprises 950 residues: Translation initiation factor IF-2 (950 aa).

4 stretches are compositionally biased toward basic and acidic residues: residues 128–156 (KPKVAEPVKKSEPKAAAKAEETKVEKVEA), 165–186 (AEVKTENVADKKEPVVTEEKKK), 200–234 (KRAEDIKKEQAAARPEKKKFDKNRNDRNNRNDNRR), and 291–312 (NRRDRDRKKTDSNRDNTKDGNR). The disordered stretch occupies residues 128 to 352 (KPKVAEPVKK…YQNNQSSNVP (225 aa)). Polar residues-rich tracts occupy residues 322–336 (NRNQVRNARNSNWNQ) and 343–352 (YQNNQSSNVP). The tr-type G domain occupies 448–619 (ERPAVVTIMG…LLVAEVQELK (172 aa)). Residues 457–464 (GHVDHGKT) are G1. Residue 457-464 (GHVDHGKT) participates in GTP binding. A G2 region spans residues 482–486 (GITQH). A G3 region spans residues 503-506 (DTPG). GTP contacts are provided by residues 503–507 (DTPGH) and 557–560 (NKLD). The segment at 557–560 (NKLD) is G4. The G5 stretch occupies residues 595 to 597 (SAK).

This sequence belongs to the TRAFAC class translation factor GTPase superfamily. Classic translation factor GTPase family. IF-2 subfamily.

It is found in the cytoplasm. In terms of biological role, one of the essential components for the initiation of protein synthesis. Protects formylmethionyl-tRNA from spontaneous hydrolysis and promotes its binding to the 30S ribosomal subunits. Also involved in the hydrolysis of GTP during the formation of the 70S ribosomal complex. This is Translation initiation factor IF-2 (infB) from Lactococcus lactis subsp. cremoris (Streptococcus cremoris).